A 469-amino-acid polypeptide reads, in one-letter code: Glutamine synthetase (469 aa).

Residues 13-97 form the GS beta-grasp domain; the sequence is NEVKFVDLRF…IRCDILEPAT (85 aa). The GS catalytic domain occupies 105-469; that stretch reads PRSIAKRAEE…PLEFELYYSV (365 aa). Residues Glu-130 and Glu-132 each coordinate Mg(2+). Glu-208 lines the ATP pocket. Residues Glu-213 and Glu-221 each contribute to the Mg(2+) site. L-glutamate is bound by residues 265–266 and Gly-266; that span reads NG. His-270 contributes to the Mg(2+) binding site. ATP-binding positions include 272–274 and Ser-274; that span reads HQS. L-glutamate-binding residues include Arg-322, Glu-328, and Arg-340. ATP contacts are provided by Arg-340, Arg-345, and Lys-353. A Mg(2+)-binding site is contributed by Glu-358. Arg-360 is a binding site for L-glutamate. Residue Tyr-398 is modified to O-AMP-tyrosine.

This sequence belongs to the glutamine synthetase family. As to quaternary structure, oligomer of 12 subunits arranged in the form of two hexameric ring. It depends on Mg(2+) as a cofactor.

It is found in the cytoplasm. It carries out the reaction L-glutamate + NH4(+) + ATP = L-glutamine + ADP + phosphate + H(+). Its activity is regulated as follows. The activity of this enzyme could be controlled by adenylation under conditions of abundant glutamine. Functionally, catalyzes the ATP-dependent biosynthesis of glutamine from glutamate and ammonia. In Vibrio cholerae serotype O1 (strain ATCC 39315 / El Tor Inaba N16961), this protein is Glutamine synthetase (glnAv).